The primary structure comprises 193 residues: Imidazoleglycerol-phosphate dehydratase (193 aa).

It belongs to the imidazoleglycerol-phosphate dehydratase family.

The protein localises to the cytoplasm. It carries out the reaction D-erythro-1-(imidazol-4-yl)glycerol 3-phosphate = 3-(imidazol-4-yl)-2-oxopropyl phosphate + H2O. Its pathway is amino-acid biosynthesis; L-histidine biosynthesis; L-histidine from 5-phospho-alpha-D-ribose 1-diphosphate: step 6/9. This chain is Imidazoleglycerol-phosphate dehydratase, found in Metallosphaera sedula (strain ATCC 51363 / DSM 5348 / JCM 9185 / NBRC 15509 / TH2).